Here is a 417-residue protein sequence, read N- to C-terminus: Divinyl chlorophyllide a 8-vinyl-reductase, chloroplastic (417 aa).

Residues 1–49 (MSLCSSFNVFASYSPKPKTIFKDSKFISQFQVKSSPLASTFHTNESSTS) constitute a chloroplast transit peptide.

Highly expressed in leaves, stems and flower buds. Detected in roots.

The protein localises to the plastid. It localises to the chloroplast. The catalysed reaction is protochlorophyllide a + NADP(+) = 3,8-divinyl protochlorophyllide a + NADPH + H(+). It functions in the pathway porphyrin-containing compound metabolism; chlorophyll biosynthesis. Its function is as follows. Catalyzes the conversion of divinyl chlorophyllide to monovinyl chlorophyllide. Reduces the 8-vinyl group of the tetrapyrrole to an ethyl group using NADPH as the reductant. The best substrate is (3,8-divinyl)-chlorophyllide a (DV-Chlidea). Very low activity with (3,8-divinyl)-protochlorophyllide a (DV-Pchlidea) and (3,8-divinyl)-magnesium-protoporphyrin IX monomethyl ester (DV-MPE). No activity with (3,8-divinyl)-chlorophyllide b (DV-Chlideb), (3,8-divinyl)-magnesium-protoporphyrin IX (DV-Mg-Proto) and either (3,8-divinyl)-chlorophyll a (DV-Chla) or b (DV-Chlb). The polypeptide is Divinyl chlorophyllide a 8-vinyl-reductase, chloroplastic (DVR) (Arabidopsis thaliana (Mouse-ear cress)).